The primary structure comprises 320 residues: Olfactory receptor 2W1 (320 aa).

At 1–25 (MDQSNYSSLHGFILLGFSNHPKMEM) the chain is on the extracellular side. N-linked (GlcNAc...) asparagine glycosylation occurs at Asn5. Residues 26 to 49 (ILSGVVAIFYLITLVGNTAIILAS) form a helical membrane-spanning segment. Residues 50 to 57 (LLDSQLHT) are Cytoplasmic-facing. A helical membrane pass occupies residues 58–79 (PMYFFLRNLSFLDLCFTTSIIP). The Extracellular segment spans residues 80–100 (QMLVNLWGPDKTISYVGCIIQ). The cysteines at positions 97 and 189 are disulfide-linked. The chain crosses the membrane as a helical span at residues 101–120 (LYVYMWLGSVECLLLAVMSY). Topologically, residues 121-139 (DRFTAICKPLHYFVVMNPH) are cytoplasmic. The chain crosses the membrane as a helical span at residues 140–158 (LCLKMIIMIWSISLANSVV). Over 159 to 195 (LCTLTLNLPTCGNNILDHFLCELPALVKIACVDTTTV) the chain is Extracellular. Residues 196–219 (EMSVFALGIIIVLTPLILILISYG) traverse the membrane as a helical segment. Residues 220-236 (YIAKAVLRTKSKASQRK) are Cytoplasmic-facing. The chain crosses the membrane as a helical span at residues 237–259 (AMNTCGSHLTVVSMFYGTIIYMY). Over 260 to 272 (LQPGNRASKDQGK) the chain is Extracellular. Residues 273-292 (FLTLFYTVITPSLNPLIYTL) traverse the membrane as a helical segment. At 293–320 (RNKDMKDALKKLMRFHHKSTKIKRNCKS) the chain is on the cytoplasmic side.

It belongs to the G-protein coupled receptor 1 family.

Its subcellular location is the cell membrane. Functionally, odorant receptor. The chain is Olfactory receptor 2W1 (OR2W1) from Homo sapiens (Human).